A 201-amino-acid chain; its full sequence is Flavin prenyltransferase UbiX (201 aa).

FMN is bound by residues 23–25 (GAS), S49, 103–106 (SIKT), and R138. Positions 168 and 184 each coordinate dimethylallyl phosphate.

The protein belongs to the UbiX/PAD1 family.

The enzyme catalyses dimethylallyl phosphate + FMNH2 = prenylated FMNH2 + phosphate. Functionally, flavin prenyltransferase that catalyzes the synthesis of the prenylated FMN cofactor (prenyl-FMN) for 4-hydroxy-3-polyprenylbenzoic acid decarboxylase UbiD. The prenyltransferase is metal-independent and links a dimethylallyl moiety from dimethylallyl monophosphate (DMAP) to the flavin N5 and C6 atoms of FMN. This is Flavin prenyltransferase UbiX from Saccharolobus solfataricus (strain ATCC 35092 / DSM 1617 / JCM 11322 / P2) (Sulfolobus solfataricus).